A 245-amino-acid chain; its full sequence is Proteolipid protein DM alpha (245 aa).

Helical transmembrane passes span 19–35, 71–87, 117–133, and 204–220; these read LIAT…FCGC, IIYG…VLLL, FIFL…GVFA, and LFIA…IALL.

Belongs to the myelin proteolipid protein family. In terms of tissue distribution, highly expressed in white matter in myelinating shark brain.

The protein resides in the membrane. The polypeptide is Proteolipid protein DM alpha (Squalus acanthias (Spiny dogfish)).